A 393-amino-acid polypeptide reads, in one-letter code: Formate-dependent phosphoribosylglycinamide formyltransferase (393 aa).

N(1)-(5-phospho-beta-D-ribosyl)glycinamide-binding positions include 22–23 (EL) and E82. Residues R114, K155, 160–165 (SSGHGQ), 195–198 (EGFV), and E203 each bind ATP. The ATP-grasp domain maps to 119–308 (RLAAEELGLP…EFALHARAIL (190 aa)). Residues E267 and E279 each contribute to the Mg(2+) site. Residues D286, K356, and 363–364 (RR) contribute to the N(1)-(5-phospho-beta-D-ribosyl)glycinamide site.

The protein belongs to the PurK/PurT family. As to quaternary structure, homodimer.

It carries out the reaction N(1)-(5-phospho-beta-D-ribosyl)glycinamide + formate + ATP = N(2)-formyl-N(1)-(5-phospho-beta-D-ribosyl)glycinamide + ADP + phosphate + H(+). The protein operates within purine metabolism; IMP biosynthesis via de novo pathway; N(2)-formyl-N(1)-(5-phospho-D-ribosyl)glycinamide from N(1)-(5-phospho-D-ribosyl)glycinamide (formate route): step 1/1. Involved in the de novo purine biosynthesis. Catalyzes the transfer of formate to 5-phospho-ribosyl-glycinamide (GAR), producing 5-phospho-ribosyl-N-formylglycinamide (FGAR). Formate is provided by PurU via hydrolysis of 10-formyl-tetrahydrofolate. This is Formate-dependent phosphoribosylglycinamide formyltransferase from Pasteurella multocida (strain Pm70).